Consider the following 950-residue polypeptide: Protocadherin alpha-3 (950 aa).

The signal sequence occupies residues 1–29 (MLFSWREDPGAQCLLLSLLLLAASEVGSG). Cadherin domains follow at residues 30 to 133 (QLHY…APVF), 134 to 242 (PMSV…APAF), 243 to 350 (ERTI…VPEL), 351 to 455 (VIHS…APAF), 456 to 565 (SQSE…APAL), and 581 to 678 (VPRS…APKA). Residues 30 to 697 (QLHYSVSEEA…GPEAALVDVN (668 aa)) lie on the Extracellular side of the membrane. 2 N-linked (GlcNAc...) asparagine glycosylation sites follow: N257 and N265. The N-linked (GlcNAc...) asparagine glycan is linked to N548. The helical transmembrane segment at 698-718 (VYLIVAICAVSSLLVLTLLLY) threads the bilayer. Residues 719 to 950 (TALRCSAPPT…GNSTTDNSDQ (232 aa)) are Cytoplasmic-facing. PXXP repeat units follow at residues 734–737 (PGKP) and 774–777 (PSLP). Residues 734 to 894 (PGKPTLVCSS…PDKFIIPGSP (161 aa)) are 6 X 4 AA repeats of P-X-X-P. Disordered stretches follow at residues 777–806 (PPCPISRDREEKQDVDVDLSAKPRQPNPDW), 831–856 (GPGGPDQQWPTVSSATPEPEAGEVSP), and 869–889 (FKYGPGNPKQSGPGELPDKFI). The span at 782–797 (SRDREEKQDVDVDLSA) shows a compositional bias: basic and acidic residues. PXXP repeat units follow at residues 799–802 (PRQP), 832–835 (PGGP), 873–876 (PGNP), and 891–894 (PGSP). The interval 901 to 950 (QEPANSQIDKSDFITFGKKEETKKKKKKKKGNKTQEKKEKGNSTTDNSDQ) is disordered. The segment covering 909 to 923 (DKSDFITFGKKEETK) has biased composition (basic and acidic residues).

It is found in the cell membrane. Functionally, potential calcium-dependent cell-adhesion protein. May be involved in the establishment and maintenance of specific neuronal connections in the brain. This is Protocadherin alpha-3 (PCDHA3) from Pan troglodytes (Chimpanzee).